The primary structure comprises 158 residues: NADPH-dependent 7-cyano-7-deazaguanine reductase (158 aa).

Cys56 (thioimide intermediate) is an active-site residue. The active-site Proton donor is Asp63. Substrate is bound by residues 78–80 (LES) and 97–98 (HE).

This sequence belongs to the GTP cyclohydrolase I family. QueF type 1 subfamily.

The protein localises to the cytoplasm. The catalysed reaction is 7-aminomethyl-7-carbaguanine + 2 NADP(+) = 7-cyano-7-deazaguanine + 2 NADPH + 3 H(+). It participates in tRNA modification; tRNA-queuosine biosynthesis. Its function is as follows. Catalyzes the NADPH-dependent reduction of 7-cyano-7-deazaguanine (preQ0) to 7-aminomethyl-7-deazaguanine (preQ1). The chain is NADPH-dependent 7-cyano-7-deazaguanine reductase from Nitrobacter winogradskyi (strain ATCC 25391 / DSM 10237 / CIP 104748 / NCIMB 11846 / Nb-255).